Reading from the N-terminus, the 264-residue chain is 4-oxalocrotonate decarboxylase (264 aa).

The protein belongs to the hydratase/decarboxylase family.

The enzyme catalyses (3E)-2-oxohex-3-enedioate + H(+) = 2-oxopent-4-enoate + CO2. Its pathway is xenobiotic degradation; toluene degradation. The polypeptide is 4-oxalocrotonate decarboxylase (xylI) (Pseudomonas putida (Arthrobacter siderocapsulatus)).